The sequence spans 484 residues: Malonate-semialdehyde dehydrogenase 1 (484 aa).

Phenylalanine 154, lysine 178, glutamate 181, arginine 182, and serine 231 together coordinate NAD(+). The active-site Nucleophile is the cysteine 286. Glutamate 384 contacts NAD(+).

It belongs to the aldehyde dehydrogenase family. IolA subfamily. Homotetramer.

It carries out the reaction 3-oxopropanoate + NAD(+) + CoA + H2O = hydrogencarbonate + acetyl-CoA + NADH + H(+). It catalyses the reaction 2-methyl-3-oxopropanoate + NAD(+) + CoA + H2O = propanoyl-CoA + hydrogencarbonate + NADH + H(+). It participates in polyol metabolism; myo-inositol degradation into acetyl-CoA; acetyl-CoA from myo-inositol: step 7/7. Catalyzes the oxidation of malonate semialdehyde (MSA) and methylmalonate semialdehyde (MMSA) into acetyl-CoA and propanoyl-CoA, respectively. Is involved in a myo-inositol catabolic pathway. Bicarbonate, and not CO2, is the end-product of the enzymatic reaction. This chain is Malonate-semialdehyde dehydrogenase 1, found in Bacillus licheniformis (strain ATCC 14580 / DSM 13 / JCM 2505 / CCUG 7422 / NBRC 12200 / NCIMB 9375 / NCTC 10341 / NRRL NRS-1264 / Gibson 46).